The sequence spans 192 residues: 3-hydroxyanthranilate 3,4-dioxygenase 1 (192 aa).

Arg50 provides a ligand contact to O2. 3 residues coordinate Fe cation: His54, Glu60, and His102. Glu60 lines the substrate pocket. 2 residues coordinate substrate: Arg106 and Glu116. 4 residues coordinate a divalent metal cation: Cys131, Cys134, Cys168, and Cys171.

The protein belongs to the 3-HAO family. The cofactor is Fe(2+).

The protein localises to the cytoplasm. The enzyme catalyses 3-hydroxyanthranilate + O2 = (2Z,4Z)-2-amino-3-carboxymuconate 6-semialdehyde. Its pathway is cofactor biosynthesis; NAD(+) biosynthesis; quinolinate from L-kynurenine: step 3/3. Functionally, catalyzes the oxidative ring opening of 3-hydroxyanthranilate to 2-amino-3-carboxymuconate semialdehyde, which spontaneously cyclizes to quinolinate. This chain is 3-hydroxyanthranilate 3,4-dioxygenase 1 (bna1-1), found in Aspergillus clavatus (strain ATCC 1007 / CBS 513.65 / DSM 816 / NCTC 3887 / NRRL 1 / QM 1276 / 107).